The primary structure comprises 280 residues: 3-phenylpropionate-dihydrodiol/cinnamic acid-dihydrodiol dehydrogenase (280 aa).

Ser143 provides a ligand contact to substrate. The Proton acceptor role is filled by Tyr156.

This sequence belongs to the short-chain dehydrogenases/reductases (SDR) family.

It catalyses the reaction 3-(cis-5,6-dihydroxycyclohexa-1,3-dien-1-yl)propanoate + NAD(+) = 3-(2,3-dihydroxyphenyl)propanoate + NADH + H(+). It carries out the reaction (2E)-3-(cis-5,6-dihydroxycyclohexa-1,3-dien-1-yl)prop-2-enoate + NAD(+) = (2E)-3-(2,3-dihydroxyphenyl)prop-2-enoate + NADH + H(+). It functions in the pathway aromatic compound metabolism; 3-phenylpropanoate degradation. Functionally, converts 3-phenylpropionate-dihydrodiol (PP-dihydrodiol) and cinnamic acid-dihydrodiol (CI-dihydrodiol) into 3-(2,3-dihydroxylphenyl)propanoic acid (DHPP) and 2,3-dihydroxicinnamic acid (DHCI), respectively. This Photorhabdus laumondii subsp. laumondii (strain DSM 15139 / CIP 105565 / TT01) (Photorhabdus luminescens subsp. laumondii) protein is 3-phenylpropionate-dihydrodiol/cinnamic acid-dihydrodiol dehydrogenase.